The primary structure comprises 514 residues: MEISQRVKARLAVLTAHLAVSDTVGLEQVLPAIAPWCTSAHITAAPHGSLKGNLTIVDERTGKKYQVPVSEHGTVKAVDLKKITTGKDDKGLKLYDPGYLNTAPVRSSICYIDGDEGILRYRGYPIEELAESSTFIEVAYLLMYGNLPSQSQLADWEFTVSQHSAVPQGVLDIIQSMPHDAHPMGVLVSAMSALSIFHPDANPALSGQDIYKSKQVRDKQIVRILGKAPTIAAAAYLRTAGRPPVLPSANLSYSENFLYMLDSMGNRSYKPNPRLARVLDILFILHAEHEMNCSTAAARHLASSGVDVYTACAGAVGALYGPLHGGANEAVLKMLAEIGTAENIPDFIEGVKNRKRKMSGFGHRVYKNYDPRAKVIKKLADEVFSIVGRDPLIEVAVALEKAALSDEYFVKRKLYPNVDFYSGLIYRAMGFPPEFFTVLFAVPRMAGYLSHWRESLDDPDTRIMRPQQAYTGVWMRHYEPVRERTLSSDSDKDKFGQVSISNASRRRLAGSSAL.

Residues His324, His363, and Asp419 contribute to the active site.

The protein belongs to the citrate synthase family. Widely expressed. Expressed throughout the shoot. Expressed in flower, silique, stem, cauline leaf, young leaf, mature leaf and senescent leaf.

It localises to the peroxisome. The enzyme catalyses oxaloacetate + acetyl-CoA + H2O = citrate + CoA + H(+). It participates in carbohydrate metabolism; tricarboxylic acid cycle; isocitrate from oxaloacetate: step 1/2. In terms of biological role, peroxisomal citrate synthase required for the fatty acid respiration in seedlings, citrate being exported from peroxisomes into mitochondria during respiration of triacylglycerol (TAG). Indeed, complete respiration requires the transfer of carbon in the form of citrate from the peroxisome to the mitochondria. The polypeptide is Citrate synthase 2, peroxisomal (CSY2) (Arabidopsis thaliana (Mouse-ear cress)).